A 320-amino-acid polypeptide reads, in one-letter code: ATP-dependent 6-phosphofructokinase (320 aa).

G12 provides a ligand contact to ATP. R22–R26 is an ADP binding site. ATP is bound by residues R73–F74 and G103–S106. Residue D104 participates in Mg(2+) binding. T126 to D128 contributes to the substrate binding site. D128 (proton acceptor) is an active-site residue. R155 serves as a coordination point for ADP. Substrate contacts are provided by residues R163 and M170 to R172. ADP contacts are provided by residues G186 to E188, K212, and K214 to H216. Substrate-binding positions include E223, R244, and H250 to R253.

The protein belongs to the phosphofructokinase type A (PFKA) family. ATP-dependent PFK group I subfamily. Prokaryotic clade 'B1' sub-subfamily. As to quaternary structure, homotetramer. The cofactor is Mg(2+).

The protein localises to the cytoplasm. It catalyses the reaction beta-D-fructose 6-phosphate + ATP = beta-D-fructose 1,6-bisphosphate + ADP + H(+). Its pathway is carbohydrate degradation; glycolysis; D-glyceraldehyde 3-phosphate and glycerone phosphate from D-glucose: step 3/4. Its activity is regulated as follows. Allosterically activated by ADP and other diphosphonucleosides, and allosterically inhibited by phosphoenolpyruvate. Catalyzes the phosphorylation of D-fructose 6-phosphate to fructose 1,6-bisphosphate by ATP, the first committing step of glycolysis. This is ATP-dependent 6-phosphofructokinase from Edwardsiella ictaluri (strain 93-146).